A 289-amino-acid polypeptide reads, in one-letter code: ATP synthase gamma chain (289 aa).

This sequence belongs to the ATPase gamma chain family. As to quaternary structure, F-type ATPases have 2 components, CF(1) - the catalytic core - and CF(0) - the membrane proton channel. CF(1) has five subunits: alpha(3), beta(3), gamma(1), delta(1), epsilon(1). CF(0) has three main subunits: a, b and c.

It localises to the cell inner membrane. Its function is as follows. Produces ATP from ADP in the presence of a proton gradient across the membrane. The gamma chain is believed to be important in regulating ATPase activity and the flow of protons through the CF(0) complex. This chain is ATP synthase gamma chain, found in Mannheimia succiniciproducens (strain KCTC 0769BP / MBEL55E).